We begin with the raw amino-acid sequence, 414 residues long: Dimethylsulfoniopropionate lyase DddY (414 aa).

A signal peptide spans 1–18; the sequence is MKYMVLFSGLLFSNVLVA.

It belongs to the DMSP lyase DddY family.

It localises to the periplasm. It carries out the reaction S,S-dimethyl-beta-propiothetin = acrylate + dimethyl sulfide + H(+). Functionally, catalyzes the cleavage of dimethylsulfoniopropionate (DMSP) into dimethyl sulfide (DMS) and acrylate. This Shewanella woodyi (strain ATCC 51908 / MS32) protein is Dimethylsulfoniopropionate lyase DddY.